Here is a 470-residue protein sequence, read N- to C-terminus: 5-hydroxytryptamine receptor 2A (470 aa).

Over 1–80 (MDVLCEENTS…LQEKNWSALL (80 aa)) the chain is Extracellular. 6 N-linked (GlcNAc...) asparagine glycosylation sites follow: N8, N38, N44, N51, N54, and N75. Residues 81-97 (TAVVIILTIAGNILVIM) form a helical membrane-spanning segment. At 98–111 (AVSLEKKLQNATNY) the chain is on the cytoplasmic side. Residues 112 to 137 (FLMSLAIADMLLGFLVMPVSMLTILY) traverse the membrane as a helical segment. The Extracellular segment spans residues 138–146 (GYRWPLPSK). A helical transmembrane segment spans residues 147–171 (LCAVWIYLDVLFSTASIMHLCAISL). C148 and C227 are joined by a disulfide. Residue D155 participates in serotonin binding. The DRY motif; important for ligand-induced conformation changes motif lies at 172–174 (DRY). Residues 172 to 191 (DRYVAIQNPIHHRRFNSRTK) are Cytoplasmic-facing. A helical transmembrane segment spans residues 192–215 (AFLKIIAVWTISVGISMPIPVFGL). Topologically, residues 216–232 (QDDSKVFKEGSCLLADD) are extracellular. A helical membrane pass occupies residues 233–258 (NFVLIGSFVSFFIPLTIMVITYFLTI). Topologically, residues 259-321 (KSLQKEATLC…QSISNEQKAC (63 aa)) are cytoplasmic. Position 280 is a phosphoserine (S280). Residues 322–347 (KVLGIVFFLFVVMWCPFFITNIMAVI) traverse the membrane as a helical segment. Residue N342 participates in serotonin binding. The cysteines at positions 348 and 352 are disulfide-linked. Residues 348–355 (CKESCNED) lie on the Extracellular side of the membrane. The chain crosses the membrane as a helical span at residues 356–381 (VIGALLNVFVWIGYLSSAVNPLVYTL). The short motif at 375–379 (NPLVY) is the NPxxY motif; important for ligand-induced conformation changes and signaling element. At 382 to 470 (FNKTYRSAFS…NTVNEKVSCV (89 aa)) the chain is on the cytoplasmic side. The interval 448–470 (GKQHSEDAPADNSNTVNEKVSCV) is disordered. The span at 458-470 (DNSNTVNEKVSCV) shows a compositional bias: polar residues. Residues 468 to 470 (SCV) carry the PDZ-binding motif.

This sequence belongs to the G-protein coupled receptor 1 family. In terms of assembly, interacts (via C-terminus) with MPDZ and PATJ. May interact (via C-terminus) with MPP3, PRDX6, DLG4, DLG1, CASK, APBA1 and MAGI2. Interacts with GRM2 and DRD2; this may affect signaling.

The protein resides in the cell membrane. It is found in the cell projection. Its subcellular location is the dendrite. It localises to the axon. The protein localises to the cytoplasmic vesicle. The protein resides in the membrane. It is found in the caveola. Its subcellular location is the presynapse. Its activity is regulated as follows. G-protein coupled receptor activity is regulated by lipids: oleamide increases HTR2A-mediated activity. In terms of biological role, G-protein coupled receptor for 5-hydroxytryptamine (serotonin). Also functions as a receptor for various drugs and psychoactive substances, including mescaline, psilocybin, 1-(2,5-dimethoxy-4-iodophenyl)-2-aminopropane (DOI) and lysergic acid diethylamide (LSD). Ligand binding causes a conformation change that triggers signaling via guanine nucleotide-binding proteins (G proteins) and modulates the activity of downstream effectors. HTR2A is coupled to G(q)/G(11) G alpha proteins and activates phospholipase C-beta, releasing diacylglycerol (DAG) and inositol 1,4,5-trisphosphate (IP3) second messengers that modulate the activity of phosphatidylinositol 3-kinase and promote the release of Ca(2+) ions from intracellular stores, respectively. Beta-arrestin family members inhibit signaling via G proteins and mediate activation of alternative signaling pathways. Affects neural activity, perception, cognition and mood. Plays a role in the regulation of behavior, including responses to anxiogenic situations and psychoactive substances. Plays a role in intestinal smooth muscle contraction, and may play a role in arterial vasoconstriction. In Sus scrofa (Pig), this protein is 5-hydroxytryptamine receptor 2A (HTR2A).